The following is a 264-amino-acid chain: Phosphonoacetaldehyde hydrolase (264 aa).

D10 (nucleophile) is an active-site residue. Mg(2+)-binding residues include D10 and A12. The active-site Schiff-base intermediate with substrate is K52. Residue D185 coordinates Mg(2+).

The protein belongs to the HAD-like hydrolase superfamily. PhnX family. As to quaternary structure, homodimer. Mg(2+) serves as cofactor.

The catalysed reaction is phosphonoacetaldehyde + H2O = acetaldehyde + phosphate + H(+). In terms of biological role, involved in phosphonate degradation. The sequence is that of Phosphonoacetaldehyde hydrolase from Parabacteroides distasonis (strain ATCC 8503 / DSM 20701 / CIP 104284 / JCM 5825 / NCTC 11152).